The following is a 565-amino-acid chain: Proline--tRNA ligase (565 aa).

Belongs to the class-II aminoacyl-tRNA synthetase family. ProS type 1 subfamily. Homodimer.

The protein resides in the cytoplasm. It carries out the reaction tRNA(Pro) + L-proline + ATP = L-prolyl-tRNA(Pro) + AMP + diphosphate. Its function is as follows. Catalyzes the attachment of proline to tRNA(Pro) in a two-step reaction: proline is first activated by ATP to form Pro-AMP and then transferred to the acceptor end of tRNA(Pro). As ProRS can inadvertently accommodate and process non-cognate amino acids such as alanine and cysteine, to avoid such errors it has two additional distinct editing activities against alanine. One activity is designated as 'pretransfer' editing and involves the tRNA(Pro)-independent hydrolysis of activated Ala-AMP. The other activity is designated 'posttransfer' editing and involves deacylation of mischarged Ala-tRNA(Pro). The misacylated Cys-tRNA(Pro) is not edited by ProRS. The sequence is that of Proline--tRNA ligase from Francisella tularensis subsp. tularensis (strain FSC 198).